The primary structure comprises 322 residues: Deoxyhypusine hydroxylase (322 aa).

HEAT-like PBS-type repeat units follow at residues 76–102 (LKHE…VLAD) and 109–135 (VRHE…YFKE). Residues His78, Glu79, His111, Glu112, His236, Glu237, His269, and Glu270 each coordinate Fe cation. The HEAT-like PBS-type 3 repeat unit spans residues 267–293 (VRHEAAEALGSIATDDVLPVLKEHLKD).

This sequence belongs to the deoxyhypusine hydroxylase family. It depends on Fe(2+) as a cofactor.

Its subcellular location is the cytoplasm. It is found in the nucleus. The enzyme catalyses [eIF5A protein]-deoxyhypusine + AH2 + O2 = [eIF5A protein]-hypusine + A + H2O. Its pathway is protein modification; eIF5A hypusination. Functionally, catalyzes the hydroxylation of the N(6)-(4-aminobutyl)-L-lysine intermediate to form hypusine, an essential post-translational modification only found in mature eIF-5A factor. This chain is Deoxyhypusine hydroxylase, found in Kluyveromyces lactis (strain ATCC 8585 / CBS 2359 / DSM 70799 / NBRC 1267 / NRRL Y-1140 / WM37) (Yeast).